A 207-amino-acid polypeptide reads, in one-letter code: Urease accessory protein UreG (207 aa).

GTP is bound at residue 13-20 (GPVGSGKT).

The protein belongs to the SIMIBI class G3E GTPase family. UreG subfamily. Homodimer. UreD, UreF and UreG form a complex that acts as a GTP-hydrolysis-dependent molecular chaperone, activating the urease apoprotein by helping to assemble the nickel containing metallocenter of UreC. The UreE protein probably delivers the nickel.

Its subcellular location is the cytoplasm. Facilitates the functional incorporation of the urease nickel metallocenter. This process requires GTP hydrolysis, probably effectuated by UreG. This Azoarcus sp. (strain BH72) protein is Urease accessory protein UreG.